The following is a 101-amino-acid chain: Non-histone chromosomal protein HMG-14 (101 aa).

The interval 1 to 101 is disordered; the sequence is MPKRKVSSAE…EAEEKEAKSD (101 aa). An ADP-ribosylserine modification is found at serine 7. Serine 8 is modified (phosphoserine). Lysine 14 is subject to N6-acetyllysine. Serine 21 carries the post-translational modification Phosphoserine. Serine 25 carries the post-translational modification ADP-ribosylserine; alternate. Phosphoserine; alternate is present on serine 25. Lysine 27 carries the N6-acetyllysine modification. Basic and acidic residues-rich tracts occupy residues 33 to 51 and 70 to 86; these read VETK…DKKV and ETKE…KNEE. Threonine 82 is subject to Phosphothreonine. Residue lysine 83 is modified to N6-acetyllysine. 3 positions are modified to phosphoserine: serine 87, serine 90, and serine 100.

This sequence belongs to the HMGN family. In terms of assembly, interacts with transcriptional regulator SEHBP. Phosphorylation on Ser-21 and Ser-25 weakens binding to nucleosomes and increases the rate of H3 phosphorylation.

It localises to the nucleus. Functionally, binds to the inner side of the nucleosomal DNA thus altering the interaction between the DNA and the histone octamer. May be involved in the process which maintains transcribable genes in a unique chromatin conformation. Inhibits the phosphorylation of nucleosomal histones H3 and H2A by RPS6KA5/MSK1 and RPS6KA3/RSK2. This chain is Non-histone chromosomal protein HMG-14 (HMGN1), found in Bos taurus (Bovine).